The chain runs to 276 residues: Formamidopyrimidine-DNA glycosylase (276 aa).

The active-site Schiff-base intermediate with DNA is P2. Residue E3 is the Proton donor of the active site. K60 acts as the Proton donor; for beta-elimination activity in catalysis. 2 residues coordinate DNA: H93 and R112. The FPG-type zinc finger occupies 240–274 (NVYGKKGEPCVTCGTILEKTVVGGRGTHYCPICQP). R264 acts as the Proton donor; for delta-elimination activity in catalysis.

The protein belongs to the FPG family. In terms of assembly, monomer. It depends on Zn(2+) as a cofactor.

It carries out the reaction Hydrolysis of DNA containing ring-opened 7-methylguanine residues, releasing 2,6-diamino-4-hydroxy-5-(N-methyl)formamidopyrimidine.. The enzyme catalyses 2'-deoxyribonucleotide-(2'-deoxyribose 5'-phosphate)-2'-deoxyribonucleotide-DNA = a 3'-end 2'-deoxyribonucleotide-(2,3-dehydro-2,3-deoxyribose 5'-phosphate)-DNA + a 5'-end 5'-phospho-2'-deoxyribonucleoside-DNA + H(+). Involved in base excision repair of DNA damaged by oxidation or by mutagenic agents. Acts as a DNA glycosylase that recognizes and removes damaged bases. Has a preference for oxidized purines, such as 7,8-dihydro-8-oxoguanine (8-oxoG). Has AP (apurinic/apyrimidinic) lyase activity and introduces nicks in the DNA strand. Cleaves the DNA backbone by beta-delta elimination to generate a single-strand break at the site of the removed base with both 3'- and 5'-phosphates. In Bacillus anthracis, this protein is Formamidopyrimidine-DNA glycosylase.